Here is a 254-residue protein sequence, read N- to C-terminus: Phosphoglycerate mutase 1 (254 aa).

Residues 10–17 and 23–24 each bind substrate; these read RHGESAWN and SG. Catalysis depends on H11, which acts as the Tele-phosphohistidine intermediate. S14 and S23 each carry phosphoserine. Residue Y26 is modified to Phosphotyrosine. S31 is modified (phosphoserine). Substrate contacts are provided by residues R62, 89 to 92, and K100; that span reads ERHY. Residue E89 is the Proton donor/acceptor of the active site. At K106 the chain carries N6-acetyllysine. Residue 116–117 coordinates substrate; it reads RR. S118 is subject to Phosphoserine. Position 187–188 (187–188) interacts with substrate; the sequence is GN. K251 is modified (N6-acetyllysine; alternate). The residue at position 251 (K251) is an N6-succinyllysine; alternate. An N6-acetyllysine mark is found at K253 and K254.

It belongs to the phosphoglycerate mutase family. BPG-dependent PGAM subfamily. As to quaternary structure, homodimer. Post-translationally, acetylated at Lys-253, Lys-253 and Lys-254 under high glucose condition. Acetylation increases catalytic activity. Under glucose restriction SIRT1 levels dramatically increase and it deacetylates the enzyme.

It catalyses the reaction (2R)-2-phosphoglycerate = (2R)-3-phosphoglycerate. The catalysed reaction is (2R)-3-phospho-glyceroyl phosphate = (2R)-2,3-bisphosphoglycerate + H(+). In terms of biological role, catalyzes the interconversion of 2-phosphoglycerate and 3-phosphoglyceratea crucial step in glycolysis, by using 2,3-bisphosphoglycerate. Also catalyzes the interconversion of (2R)-2,3-bisphosphoglycerate and (2R)-3-phospho-glyceroyl phosphate. This Mus musculus (Mouse) protein is Phosphoglycerate mutase 1.